Here is a 117-residue protein sequence, read N- to C-terminus: U9-theraphotoxin-Hhn1a (117 aa).

An N-terminal signal peptide occupies residues 1 to 21 (MNTVRVTFLLVFVLAVSLGQA). A propeptide spanning residues 22–75 (DEDGNRMEMRQEIEKTEADSSYFAENLLLQKLEELEAKLWEETSEESRNSRQKR) is cleaved from the precursor. Disulfide bonds link cysteine 76-cysteine 94, cysteine 83-cysteine 99, and cysteine 93-cysteine 114.

It belongs to the neurotoxin 14 (magi-1) family. 01 (HNTX-16) subfamily. In terms of tissue distribution, expressed by the venom gland.

It localises to the secreted. Probable ion channel inhibitor. The protein is U9-theraphotoxin-Hhn1a of Cyriopagopus hainanus (Chinese bird spider).